The following is a 623-amino-acid chain: MGDLPGSGSTAQPRDAAVTGTGGNSTAGGGSSVGSTAVDRPPSPARLSHTSEKHPKVTLTELNMLRRHRELCDVVLNVGGRKIFAHRVILSACSSYFCAMFTGELEESRQTEVTIRDIDENAMELLIDFCYTAHIIVEESNVQTLLPAACLLQLVEIQDICCEFLKRQLDPTNCLGIRAFADTHSCRELLRIADKFTQHNFQEVMESEEFLLLPVGQLVDIICSDELNVRSEEQVFNAVMSWLKYNVAERRQHLAQVLQHVRLPLLSPKFLVGTVGSDLLVRSDEACRDLVDEAKNYLLLPQERPLMQGPRTRPRKPTRRGEVLFAVGGWCSGDAIASVERFDPQTNDWKMVAPMSKRRCGVGVAVLNDLLYAVGGHDGQSYLNSIERYDPQTNQWSCDVAPTTSCRTSVGVAVLDGFLYAVGGQDGVQCLNHVERYDPKENKWSKVAPMTTRRLGVAVAVLGGFLYAIGGSDGQCPLNTVERYDPRHNKWVAVSPMSTRRKHLGCAVFNNYIYAVGGRDDCMELSSAERYNPLTNTWSPIVAMTSRRSGVGLAVVNGQLYAVGGFDGSAYLKTIEVYDPETNQWRLCGCMNYRRLGGGVGVMRAPQTENYMWCENSFKQPNS.

Residues 1–54 are disordered; the sequence is MGDLPGSGSTAQPRDAAVTGTGGNSTAGGGSSVGSTAVDRPPSPARLSHTSEKH. Thr-19 is modified (phosphothreonine). Over residues 20 to 32 the composition is skewed to gly residues; it reads GTGGNSTAGGGSS. Residues 72-139 enclose the BTB domain; that stretch reads CDVVLNVGGR…CYTAHIIVEE (68 aa). One can recognise a BACK domain in the interval 174-276; the sequence is CLGIRAFADT…SPKFLVGTVG (103 aa). Kelch repeat units follow at residues 323 to 369, 371 to 417, 418 to 464, 466 to 511, 513 to 558, and 559 to 605; these read VLFA…VLND, LYAV…VLDG, FLYA…VLGG, LYAI…VFNN, IYAV…VVNG, and QLYA…VMRA.

It functions in the pathway protein modification; protein ubiquitination. Probable substrate-specific adapter of an E3 ubiquitin-protein ligase complex which mediates the ubiquitination and subsequent proteasomal degradation of target proteins. May have a role in synapse differentiation and growth. The protein is Kelch-like protein diablo of Drosophila melanogaster (Fruit fly).